A 344-amino-acid chain; its full sequence is Fructose-bisphosphate aldolase (344 aa).

Residue S53 participates in D-glyceraldehyde 3-phosphate binding. The active-site Proton donor is the D95. Residues H96, D131, E161, and H212 each coordinate Zn(2+). Dihydroxyacetone phosphate is bound at residue G213. H252 contributes to the Zn(2+) binding site. Dihydroxyacetone phosphate is bound by residues 253–255 (GGS) and 274–277 (NVDT).

The protein belongs to the class II fructose-bisphosphate aldolase family. The cofactor is Zn(2+).

It catalyses the reaction beta-D-fructose 1,6-bisphosphate = D-glyceraldehyde 3-phosphate + dihydroxyacetone phosphate. It functions in the pathway carbohydrate degradation; glycolysis; D-glyceraldehyde 3-phosphate and glycerone phosphate from D-glucose: step 4/4. Its function is as follows. Catalyzes the aldol condensation of dihydroxyacetone phosphate (DHAP or glycerone-phosphate) with glyceraldehyde 3-phosphate (G3P) to form fructose 1,6-bisphosphate (FBP) in gluconeogenesis and the reverse reaction in glycolysis. The protein is Fructose-bisphosphate aldolase (fba) of Mycobacterium bovis (strain ATCC BAA-935 / AF2122/97).